Consider the following 549-residue polypeptide: Oxygen-dependent choline dehydrogenase (549 aa).

4–33 contacts FAD; that stretch reads DFVIIGSGSAGSALAYRLSEDGANSVVVLE. H465 (proton acceptor) is an active-site residue.

The protein belongs to the GMC oxidoreductase family. The cofactor is FAD.

It catalyses the reaction choline + A = betaine aldehyde + AH2. It carries out the reaction betaine aldehyde + NAD(+) + H2O = glycine betaine + NADH + 2 H(+). It functions in the pathway amine and polyamine biosynthesis; betaine biosynthesis via choline pathway; betaine aldehyde from choline (cytochrome c reductase route): step 1/1. Its function is as follows. Involved in the biosynthesis of the osmoprotectant glycine betaine. Catalyzes the oxidation of choline to betaine aldehyde and betaine aldehyde to glycine betaine at the same rate. This Sinorhizobium medicae (strain WSM419) (Ensifer medicae) protein is Oxygen-dependent choline dehydrogenase.